The primary structure comprises 446 residues: Radical S-adenosyl methionine domain-containing protein 1, mitochondrial (446 aa).

A Radical SAM core domain is found at 15-277 (KGYNKLKDLP…VCEAEAMGFQ (263 aa)). The [4Fe-4S] cluster site is built by Cys-34, Cys-38, and Cys-41. S-adenosyl-L-methionine contacts are provided by residues Gly-94, 95-96 (GT), Glu-130, Gln-159, Arg-171, and Asp-195.

This sequence belongs to the anaerobic coproporphyrinogen-III oxidase family. HemW subfamily.

The protein localises to the mitochondrion. In terms of biological role, may be a heme chaperone, appears to bind heme. Homologous bacterial proteins do not have oxygen-independent coproporphyrinogen-III oxidase activity. Binds 1 [4Fe-4S] cluster. The cluster is coordinated with 3 cysteines and an exchangeable S-adenosyl-L-methionine. The protein is Radical S-adenosyl methionine domain-containing protein 1, mitochondrial (rsad1) of Dictyostelium discoideum (Social amoeba).